The primary structure comprises 234 residues: Large ribosomal subunit protein uL1 (234 aa).

It belongs to the universal ribosomal protein uL1 family. As to quaternary structure, part of the 50S ribosomal subunit.

Functionally, binds directly to 23S rRNA. The L1 stalk is quite mobile in the ribosome, and is involved in E site tRNA release. In terms of biological role, protein L1 is also a translational repressor protein, it controls the translation of the L11 operon by binding to its mRNA. This is Large ribosomal subunit protein uL1 from Klebsiella pneumoniae (strain 342).